We begin with the raw amino-acid sequence, 257 residues long: Ribonuclease HII (257 aa).

Residues 72–257 enclose the RNase H type-2 domain; it reads ERVAGIDEVG…FSPVQKILQA (186 aa). Aspartate 78, glutamate 79, and aspartate 170 together coordinate a divalent metal cation.

The protein belongs to the RNase HII family. It depends on Mn(2+) as a cofactor. Mg(2+) is required as a cofactor.

It localises to the cytoplasm. It catalyses the reaction Endonucleolytic cleavage to 5'-phosphomonoester.. Its function is as follows. Endonuclease that specifically degrades the RNA of RNA-DNA hybrids. The protein is Ribonuclease HII of Levilactobacillus brevis (strain ATCC 367 / BCRC 12310 / CIP 105137 / JCM 1170 / LMG 11437 / NCIMB 947 / NCTC 947) (Lactobacillus brevis).